A 1895-amino-acid chain; its full sequence is 1,3-beta-glucan synthase component GSC2 (1895 aa).

Polar residues-rich tracts occupy residues 1-16 (MSYN…YSNG) and 25-34 (PTYQVTQDQS). Disordered stretches follow at residues 1–143 (MSYN…PYGN) and 269–292 (ARKA…EETL). Over 1 to 473 (MSYNDPNLNG…WLHLVTNFNR (473 aa)) the chain is Extracellular. The segment covering 65 to 78 (QFPQGQDPSQDQGP) has biased composition (low complexity). 2 stretches are compositionally biased toward polar residues: residues 79-107 (YNND…SDFS) and 115-141 (TYPN…STPY). The segment covering 269–278 (ARKAKKKNKK) has biased composition (basic residues). Residue lysine 278 forms a Glycyl lysine isopeptide (Lys-Gly) (interchain with G-Cter in ubiquitin) linkage. Phosphothreonine occurs at positions 288 and 291. Residue lysine 405 forms a Glycyl lysine isopeptide (Lys-Gly) (interchain with G-Cter in ubiquitin) linkage. The helical transmembrane segment at 474 to 494 (IWIMHISVYWMYCAYNAPTFY) threads the bilayer. Residues 495–511 (THNYQQLVDNQPLAAYK) are Cytoplasmic-facing. Residues 512-532 (WATAALGGTVASLIQVAATLC) traverse the membrane as a helical segment. Over 533–550 (EWSFVPRKWAGAQHLSRR) the chain is Extracellular. The chain crosses the membrane as a helical span at residues 551-571 (FWFLCVIMGINLGPVIFVFAY). Residues 572-582 (DKDTVYSTAAH) are Cytoplasmic-facing. Residues 583-603 (VVGAVMFFVAVATLVFFSVMP) form a helical membrane-spanning segment. Residues 604–1579 (LGGLFTSYMK…DASRAHRTNL (976 aa)) are Extracellular-facing. Residues lysine 929, lysine 934, lysine 1558, and lysine 1566 each participate in a glycyl lysine isopeptide (Lys-Gly) (interchain with G-Cter in ubiquitin) cross-link. A helical transmembrane segment spans residues 1580–1600 (IMAEIIPCAIYAAGCFIAFTF). At 1601-1620 (INAQTGVKTTDEDRVNSTLR) the chain is on the cytoplasmic side. The chain crosses the membrane as a helical span at residues 1621 to 1641 (IIICTLAPIVIDIGVLFFCMG). Over 1642 to 1758 (LSCCSGPLLG…LTAKVIELSE (117 aa)) the chain is Extracellular. Residues 1759 to 1779 (FAADFVLGHVILIFQLPVICI) form a helical membrane-spanning segment. Over 1780 to 1821 (PKIDKFHSIMLFWLKPSRQIRPPIYSLKQARLRKRMVRRYCS) the chain is Cytoplasmic. The chain crosses the membrane as a helical span at residues 1822–1842 (LYFLVLIIFAGCIVGPAVASA). Topologically, residues 1843-1895 (HVPKDLGSGLTGTFHNLVQPRNVSNNDTGSQMSTYKSHYYTHTPSLKTWSTIK) are extracellular.

Belongs to the glycosyltransferase 48 family. In terms of assembly, component of the 1,3-beta-glucan synthase (GS) complex, composed of two alternate catalytic subunits FKS1 or GSC2, and a regulatory subunit RHO1. Interacts with SMK1.

The protein resides in the membrane. It catalyses the reaction [(1-&gt;3)-beta-D-glucosyl](n) + UDP-alpha-D-glucose = [(1-&gt;3)-beta-D-glucosyl](n+1) + UDP + H(+). Functionally, alternate catalytic subunit of the 1,3-beta-glucan synthase (GS) complex. Synthesizes 1,3-beta-glucan, a major structural component of the yeast cell wall. Required for spore wall assembly. Negative regulation of activity by SMK1 is important for spore wall deposition. Activity is positively regulated by RHO1. This chain is 1,3-beta-glucan synthase component GSC2, found in Saccharomyces cerevisiae (strain ATCC 204508 / S288c) (Baker's yeast).